Here is a 514-residue protein sequence, read N- to C-terminus: ATP synthase subunit alpha (514 aa).

Residue 170–177 (GDRQIGKT) participates in ATP binding.

It belongs to the ATPase alpha/beta chains family. In terms of assembly, F-type ATPases have 2 components, CF(1) - the catalytic core - and CF(0) - the membrane proton channel. CF(1) has five subunits: alpha(3), beta(3), gamma(1), delta(1), epsilon(1). CF(0) has three main subunits: a(1), b(2) and c(9-12). The alpha and beta chains form an alternating ring which encloses part of the gamma chain. CF(1) is attached to CF(0) by a central stalk formed by the gamma and epsilon chains, while a peripheral stalk is formed by the delta and b chains.

The protein localises to the cell inner membrane. The catalysed reaction is ATP + H2O + 4 H(+)(in) = ADP + phosphate + 5 H(+)(out). In terms of biological role, produces ATP from ADP in the presence of a proton gradient across the membrane. The alpha chain is a regulatory subunit. The protein is ATP synthase subunit alpha of Marinobacter nauticus (strain ATCC 700491 / DSM 11845 / VT8) (Marinobacter aquaeolei).